The sequence spans 411 residues: Tyrosine--tRNA ligase (411 aa).

An L-tyrosine-binding site is contributed by Tyr-34. Residues 39–48 carry the 'HIGH' region motif; the sequence is CTATSLHIGS. The L-tyrosine site is built by Tyr-171 and Gln-175. The 'KMSKS' region motif lies at 231–235; that stretch reads KMGKT. ATP is bound at residue Lys-234. An S4 RNA-binding domain is found at 345–411; the sequence is ISAYELFHEA…GKKRHILVRV (67 aa).

It belongs to the class-I aminoacyl-tRNA synthetase family. TyrS type 1 subfamily. Homodimer.

The protein localises to the cytoplasm. It catalyses the reaction tRNA(Tyr) + L-tyrosine + ATP = L-tyrosyl-tRNA(Tyr) + AMP + diphosphate + H(+). In terms of biological role, catalyzes the attachment of tyrosine to tRNA(Tyr) in a two-step reaction: tyrosine is first activated by ATP to form Tyr-AMP and then transferred to the acceptor end of tRNA(Tyr). This Rickettsia massiliae (strain Mtu5) protein is Tyrosine--tRNA ligase.